The primary structure comprises 315 residues: Putative ankyrin repeat protein R600 (315 aa).

ANK repeat units lie at residues Asn-79–Val-108, Ser-118–Thr-152, Asp-153–Ser-182, Gln-184–Asp-211, and Asp-212–Thr-240.

The sequence is that of Putative ankyrin repeat protein R600 from Acanthamoeba polyphaga mimivirus (APMV).